A 420-amino-acid chain; its full sequence is Gamma-glutamyl phosphate reductase (420 aa).

The protein belongs to the gamma-glutamyl phosphate reductase family.

Its subcellular location is the cytoplasm. It carries out the reaction L-glutamate 5-semialdehyde + phosphate + NADP(+) = L-glutamyl 5-phosphate + NADPH + H(+). The protein operates within amino-acid biosynthesis; L-proline biosynthesis; L-glutamate 5-semialdehyde from L-glutamate: step 2/2. Its function is as follows. Catalyzes the NADPH-dependent reduction of L-glutamate 5-phosphate into L-glutamate 5-semialdehyde and phosphate. The product spontaneously undergoes cyclization to form 1-pyrroline-5-carboxylate. This chain is Gamma-glutamyl phosphate reductase, found in Streptococcus pneumoniae (strain ATCC 700669 / Spain 23F-1).